Consider the following 811-residue polypeptide: Transmembrane protease serine 6 (811 aa).

The Cytoplasmic segment spans residues 1 to 55; sequence MLLLFHSKRMPVAEAPQVAGGQGDGGDGEEAEPEGMFKACEDSKRKARGYLRLVP. Residues 56–76 form a helical; Signal-anchor for type II membrane protein membrane-spanning segment; that stretch reads LFVLLALLVLASAGVLLWYFL. The Extracellular portion of the chain corresponds to 77 to 811; that stretch reads GYKAEVMVSQ…VISWIQQVVT (735 aa). The 126-residue stretch at 84–209 folds into the SEA domain; that stretch reads VSQVYSGSLR…EGLVILEASV (126 aa). N-linked (GlcNAc...) asparagine glycosylation is found at Asn136, Asn184, Asn216, Asn338, Asn433, and Asn453. 2 CUB domains span residues 213-336 and 335-452; these read AALN…QACE and CEVN…YGLY. The cysteines at positions 335 and 366 are disulfide-linked. 3 consecutive LDL-receptor class A domains span residues 457–489, 490–526, and 530–567; these read PCPGEFLCSVNGLCVPACDGVKDCPNGLDERNC, VCRATFQCKEDSTCISLPKVCDGQPDCLNGSDEEQCQ, and PCGTFTFQCEDRSCVKKPNPQCDGRPDCRDGSDEEHCD. Intrachain disulfides connect Cys458–Cys470, Cys464–Cys480, Cys474–Cys489, Cys491–Cys503, Cys497–Cys516, Cys510–Cys525, Cys531–Cys543, Cys538–Cys557, Cys551–Cys566, and Cys602–Cys618. The N-linked (GlcNAc...) asparagine glycan is linked to Asn518. Residues 577–811 enclose the Peptidase S1 domain; that stretch reads IVGGAVSSEG…VISWIQQVVT (235 aa). Catalysis depends on charge relay system residues His617 and Asp668. Disulfide bonds link Cys702–Cys768, Cys733–Cys747, and Cys758–Cys787. The active-site Charge relay system is Ser762.

It belongs to the peptidase S1 family. In terms of assembly, interacts with HJV. In terms of processing, the single-chain zymogen undergoes autoproteolytic processing. This results in TMPRSS6 shedding from the cell surface and conversion into an activated two-chains form which is released extracellularly. The process involves a trans-activation mechanism that requires TMPRSS6 oligomerization.

The protein resides in the cell membrane. Its function is as follows. Membrane-bound serine protease. Through the cleavage of cell surface hemojuvelin (HJV), a regulator of the expression of the iron absorption-regulating hormone hepicidin/HAMP, plays a role in iron homeostasis. This is Transmembrane protease serine 6 (TMPRSS6) from Homo sapiens (Human).